The primary structure comprises 66 residues: Beta-toxin Ct71 (66 aa).

One can recognise an LCN-type CS-alpha/beta domain in the interval 1 to 66; the sequence is KEGYIVNYHD…VWPLPKKTCN (66 aa). 4 cysteine pairs are disulfide-bonded: Cys12–Cys65, Cys16–Cys41, Cys25–Cys46, and Cys29–Cys48. Asparagine amide is present on Asn66.

The protein belongs to the long (4 C-C) scorpion toxin superfamily. Sodium channel inhibitor family. Beta subfamily. As to expression, expressed by the venom gland.

The protein localises to the secreted. In terms of biological role, beta toxins bind voltage-independently at site-4 of sodium channels (Nav) and shift the voltage of activation toward more negative potentials thereby affecting sodium channel activation and promoting spontaneous and repetitive firing. Lethal to mice. The chain is Beta-toxin Ct71 from Centruroides tecomanus (Scorpion).